We begin with the raw amino-acid sequence, 291 residues long: Polyamine aminopropyltransferase (291 aa).

One can recognise a PABS domain in the interval 5 to 245 (PGPVSLIEPL…YAVNYIIGSL (241 aa)). Q36 is a binding site for S-methyl-5'-thioadenosine. H67 and E91 together coordinate spermidine. S-methyl-5'-thioadenosine is bound by residues D111 and 143 to 144 (DG). D164 functions as the Proton acceptor in the catalytic mechanism.

It belongs to the spermidine/spermine synthase family. As to quaternary structure, homodimer or homotetramer.

Its subcellular location is the cytoplasm. It carries out the reaction S-adenosyl 3-(methylsulfanyl)propylamine + putrescine = S-methyl-5'-thioadenosine + spermidine + H(+). The protein operates within amine and polyamine biosynthesis; spermidine biosynthesis; spermidine from putrescine: step 1/1. Its function is as follows. Catalyzes the irreversible transfer of a propylamine group from the amino donor S-adenosylmethioninamine (decarboxy-AdoMet) to putrescine (1,4-diaminobutane) to yield spermidine. This chain is Polyamine aminopropyltransferase, found in Pyrobaculum islandicum (strain DSM 4184 / JCM 9189 / GEO3).